The sequence spans 550 residues: Putative pentatricopeptide repeat-containing protein At5g37570 (550 aa).

PPR repeat units lie at residues G73–R107, D109–K143, D144–R174, N175–R205, N206–S240, Y241–V267, D268–P302, D303–R333, S339–R369, D370–P404, D405–K435, and S441–S475. The tract at residues A476–R550 is type E motif.

This sequence belongs to the PPR family. PCMP-E subfamily.

This is Putative pentatricopeptide repeat-containing protein At5g37570 (PCMP-E37) from Arabidopsis thaliana (Mouse-ear cress).